The chain runs to 290 residues: Arylamine N-acetyltransferase 1 (290 aa).

The residue at position 1 (Met-1) is an N-acetylmethionine. Cys-68 functions as the Acyl-thioester intermediate in the catalytic mechanism. Ser-103 contacts CoA. Substrate is bound at residue 106-107 (IH). Residues His-107 and Asp-122 contribute to the active site. Positions 208 and 287 each coordinate CoA.

It belongs to the arylamine N-acetyltransferase family.

It is found in the cytoplasm. It carries out the reaction an arylamine + acetyl-CoA = an N-acetylarylamine + CoA. Functionally, participates in the detoxification of a plethora of hydrazine and arylamine drugs. This is Arylamine N-acetyltransferase 1 (NAT1) from Mesocricetus auratus (Golden hamster).